A 245-amino-acid chain; its full sequence is Orotidine 5'-phosphate decarboxylase (245 aa).

Residues Asp-22, Lys-44, 71–80, Thr-131, Arg-192, Gln-201, Gly-221, and Arg-222 contribute to the substrate site; that span reads DLKFHDIPNT. Lys-73 acts as the Proton donor in catalysis.

Belongs to the OMP decarboxylase family. Type 1 subfamily. As to quaternary structure, homodimer.

The catalysed reaction is orotidine 5'-phosphate + H(+) = UMP + CO2. It functions in the pathway pyrimidine metabolism; UMP biosynthesis via de novo pathway; UMP from orotate: step 2/2. In terms of biological role, catalyzes the decarboxylation of orotidine 5'-monophosphate (OMP) to uridine 5'-monophosphate (UMP). The sequence is that of Orotidine 5'-phosphate decarboxylase from Shigella boydii serotype 18 (strain CDC 3083-94 / BS512).